The following is a 366-amino-acid chain: Transmembrane protein 26 (366 aa).

3 consecutive transmembrane segments (helical) span residues 4–24 (LVLL…LVAV), 36–56 (YWLL…TLKF), and 64–84 (WLSP…WLLE). N-linked (GlcNAc...) asparagine glycosylation is present at Asn-110. The next 5 helical transmembrane spans lie at 138–158 (MVCE…ILII), 176–196 (ELLL…TETL), 208–228 (VSGI…DLAV), 258–278 (IGLS…VLMI), and 282–302 (VINH…ALHF). The span at 319-329 (HPESPKPEHSG) shows a compositional bias: basic and acidic residues. The interval 319–366 (HPESPKPEHSGPDQPSESGPSEWEDASPEALPLRTSPVTSEESYPTTP) is disordered. A compositionally biased stretch (polar residues) spans 354–366 (SPVTSEESYPTTP).

The protein localises to the membrane. The sequence is that of Transmembrane protein 26 (Tmem26) from Mus musculus (Mouse).